Here is a 1379-residue protein sequence, read N- to C-terminus: ABC multidrug transporter MDR2 (1379 aa).

The chain crosses the membrane as a helical span at residues Ile-65–Leu-85. The region spanning Val-69 to Ser-367 is the ABC transmembrane type-1 1 domain. Asn-97 carries N-linked (GlcNAc...) asparagine glycosylation. Transmembrane regions (helical) follow at residues Val-119–Cys-139, Lys-193–Leu-213, Val-215–Gly-235, Ile-301–Gly-321, and Val-336–Ser-356. The ABC transporter 1 domain maps to Ile-403–Leu-682. Gly-438–Ser-445 is a binding site for ATP. Asn-552 and Asn-633 each carry an N-linked (GlcNAc...) asparagine glycan. Residues Tyr-738–Lys-758 are disordered. A run of 4 helical transmembrane segments spans residues Leu-781–Gly-801, Gly-820–Val-840, Ile-901–Ile-921, and Ala-922–Leu-942. One can recognise an ABC transmembrane type-1 2 domain in the interval Leu-781 to Lys-1068. The N-linked (GlcNAc...) asparagine glycan is linked to Asn-989. 2 helical membrane-spanning segments follow: residues Phe-1008–Gly-1028 and Ile-1032–Ser-1052. Residues Val-1135–His-1374 form the ABC transporter 2 domain. Gly-1170 to Ser-1177 lines the ATP pocket.

This sequence belongs to the ABC transporter superfamily. ABCB family. Multidrug resistance exporter (TC 3.A.1.201) subfamily.

It localises to the cell membrane. Pleiotropic ABC efflux transporter that may be involved in the modulation susceptibility to a wide range of unrelated cytotoxic compounds. The chain is ABC multidrug transporter MDR2 from Trichophyton equinum (strain ATCC MYA-4606 / CBS 127.97) (Horse ringworm fungus).